The primary structure comprises 28 residues: Metallothionein-like protein type 2 LSC210 (28 aa).

Belongs to the metallothionein superfamily. Type 15 family.

Functionally, metallothioneins have a high content of cysteine residues that bind various heavy metals. The polypeptide is Metallothionein-like protein type 2 LSC210 (LSC210) (Brassica napus (Rape)).